Reading from the N-terminus, the 256-residue chain is Small ribosomal subunit protein eS1 (256 aa).

Residues M1–K18 are compositionally biased toward basic residues. Residues M1–V21 form a disordered region. N-acetylalanine; partial is present on A2.

Belongs to the eukaryotic ribosomal protein eS1 family. As to quaternary structure, component of the small ribosomal subunit. Mature ribosomes consist of a small (40S) and a large (60S) subunit. The 40S subunit contains about 33 different proteins and 1 molecule of RNA (18S). The 60S subunit contains about 49 different proteins and 3 molecules of RNA (25S, 5.8S and 5S).

It is found in the cytoplasm. This chain is Small ribosomal subunit protein eS1 (rps1), found in Neosartorya fischeri (strain ATCC 1020 / DSM 3700 / CBS 544.65 / FGSC A1164 / JCM 1740 / NRRL 181 / WB 181) (Aspergillus fischerianus).